The following is a 252-amino-acid chain: 3-deoxy-manno-octulosonate cytidylyltransferase (252 aa).

Belongs to the KdsB family.

It is found in the cytoplasm. The enzyme catalyses 3-deoxy-alpha-D-manno-oct-2-ulosonate + CTP = CMP-3-deoxy-beta-D-manno-octulosonate + diphosphate. It functions in the pathway nucleotide-sugar biosynthesis; CMP-3-deoxy-D-manno-octulosonate biosynthesis; CMP-3-deoxy-D-manno-octulosonate from 3-deoxy-D-manno-octulosonate and CTP: step 1/1. Its pathway is bacterial outer membrane biogenesis; lipopolysaccharide biosynthesis. Activates KDO (a required 8-carbon sugar) for incorporation into bacterial lipopolysaccharide in Gram-negative bacteria. The chain is 3-deoxy-manno-octulosonate cytidylyltransferase from Vibrio campbellii (strain ATCC BAA-1116).